The primary structure comprises 397 residues: Phosphoglycerate kinase (397 aa).

Substrate is bound by residues 21-23 (DFN), R37, 60-63 (HLGR), R119, and R152. ATP is bound by residues K203, G294, E325, and 354 to 357 (GGDS).

It belongs to the phosphoglycerate kinase family. As to quaternary structure, monomer.

The protein resides in the cytoplasm. The catalysed reaction is (2R)-3-phosphoglycerate + ATP = (2R)-3-phospho-glyceroyl phosphate + ADP. It participates in carbohydrate degradation; glycolysis; pyruvate from D-glyceraldehyde 3-phosphate: step 2/5. This is Phosphoglycerate kinase from Chlorobium phaeobacteroides (strain DSM 266 / SMG 266 / 2430).